The primary structure comprises 240 residues: Phosphoribosyl isomerase A (240 aa).

Catalysis depends on Asp11, which acts as the Proton acceptor. Asp130 functions as the Proton donor in the catalytic mechanism.

This sequence belongs to the HisA/HisF family. As to quaternary structure, monomer.

The protein resides in the cytoplasm. The catalysed reaction is 1-(5-phospho-beta-D-ribosyl)-5-[(5-phospho-beta-D-ribosylamino)methylideneamino]imidazole-4-carboxamide = 5-[(5-phospho-1-deoxy-D-ribulos-1-ylimino)methylamino]-1-(5-phospho-beta-D-ribosyl)imidazole-4-carboxamide. It carries out the reaction N-(5-phospho-beta-D-ribosyl)anthranilate = 1-(2-carboxyphenylamino)-1-deoxy-D-ribulose 5-phosphate. It participates in amino-acid biosynthesis; L-histidine biosynthesis; L-histidine from 5-phospho-alpha-D-ribose 1-diphosphate: step 4/9. Its pathway is amino-acid biosynthesis; L-tryptophan biosynthesis; L-tryptophan from chorismate: step 3/5. Catalyzes the isomerization of the aminoaldose moiety of ProFAR to the aminoketose of PRFAR in the biosynthesis pathway for histidine and the isomerization of the aminoaldose PRA to the aminoketose CdRP in the biosynthsis pathway for tryptophan. This chain is Phosphoribosyl isomerase A (priA), found in Streptomyces coelicolor (strain ATCC BAA-471 / A3(2) / M145).